A 217-amino-acid polypeptide reads, in one-letter code: Ribonuclease HII (217 aa).

The RNase H type-2 domain occupies 25 to 215 (KLIAGVDESG…VKHVISDINR (191 aa)). A divalent metal cation-binding residues include aspartate 31, glutamate 32, and aspartate 123.

It belongs to the RNase HII family. The cofactor is Mn(2+). Requires Mg(2+) as cofactor.

Its subcellular location is the cytoplasm. It carries out the reaction Endonucleolytic cleavage to 5'-phosphomonoester.. Functionally, endonuclease that specifically degrades the RNA of RNA-DNA hybrids. This is Ribonuclease HII from Blochmanniella pennsylvanica (strain BPEN).